The following is a 302-amino-acid chain: Stanniocalcin-2 (302 aa).

The N-terminal stretch at 1–24 (MCAERLGHFMTLALVLATIDPARG) is a signal peptide. The segment at 23 to 44 (RGTDATNPPEGPQDRSSQQKGR) is disordered. Residue N73 is glycosylated (N-linked (GlcNAc...) asparagine). A disordered region spans residues 218 to 302 (PPTAPPERQP…EQSEYSDIRR (85 aa)). The span at 227–264 (PQVDRAKLSRAHHGEAGHHLPEPSSRETGRGAKGERGS) shows a compositional bias: basic and acidic residues. Residues S250 and S251 each carry the phosphoserine modification. Position 254 is a phosphothreonine (T254).

It belongs to the stanniocalcin family. Homodimer; disulfide-linked.

Its subcellular location is the secreted. In terms of biological role, has an anti-hypocalcemic action on calcium and phosphate homeostasis. The protein is Stanniocalcin-2 (STC2) of Macaca nemestrina (Pig-tailed macaque).